Consider the following 334-residue polypeptide: Large ribosomal subunit protein uL3 (334 aa).

A compositionally biased stretch (basic residues) spans 1 to 10; the sequence is MGMKKNRPRR. A disordered region spans residues 1-21; it reads MGMKKNRPRRGSLAFSPRKRA.

It belongs to the universal ribosomal protein uL3 family. In terms of assembly, part of the 50S ribosomal subunit. Forms a cluster with proteins L14 and L24e.

Functionally, one of the primary rRNA binding proteins, it binds directly near the 3'-end of the 23S rRNA, where it nucleates assembly of the 50S subunit. This is Large ribosomal subunit protein uL3 from Methanococcus maripaludis (strain DSM 14266 / JCM 13030 / NBRC 101832 / S2 / LL).